A 270-amino-acid polypeptide reads, in one-letter code: Formamidopyrimidine-DNA glycosylase (270 aa).

Pro-2 functions as the Schiff-base intermediate with DNA in the catalytic mechanism. Glu-3 serves as the catalytic Proton donor. The active-site Proton donor; for beta-elimination activity is Lys-57. Positions 90, 109, and 150 each coordinate DNA. An FPG-type zinc finger spans residues 235–269 (LVYGNKDKPCPRCGTKIKSIIIGQRNSFFCPQCQK). The active-site Proton donor; for delta-elimination activity is the Arg-259.

It belongs to the FPG family. Monomer. Requires Zn(2+) as cofactor.

It carries out the reaction Hydrolysis of DNA containing ring-opened 7-methylguanine residues, releasing 2,6-diamino-4-hydroxy-5-(N-methyl)formamidopyrimidine.. It catalyses the reaction 2'-deoxyribonucleotide-(2'-deoxyribose 5'-phosphate)-2'-deoxyribonucleotide-DNA = a 3'-end 2'-deoxyribonucleotide-(2,3-dehydro-2,3-deoxyribose 5'-phosphate)-DNA + a 5'-end 5'-phospho-2'-deoxyribonucleoside-DNA + H(+). Its function is as follows. Involved in base excision repair of DNA damaged by oxidation or by mutagenic agents. Acts as a DNA glycosylase that recognizes and removes damaged bases. Has a preference for oxidized purines, such as 7,8-dihydro-8-oxoguanine (8-oxoG). Has AP (apurinic/apyrimidinic) lyase activity and introduces nicks in the DNA strand. Cleaves the DNA backbone by beta-delta elimination to generate a single-strand break at the site of the removed base with both 3'- and 5'-phosphates. This chain is Formamidopyrimidine-DNA glycosylase, found in Histophilus somni (strain 2336) (Haemophilus somnus).